A 149-amino-acid polypeptide reads, in one-letter code: Protein OPG200 (149 aa).

Belongs to the orthopoxvirus OPG200 family. In terms of assembly, homodimers. Interacts with host IKBKB; this interaction inhibits host NF-kappa-B activation.

Contributes to virulence by binding to the host IKBKB subunit of the IKK complex and preventing host NF-kappa-B activation in response to pro-inflammatory stimuli such as TNF-alpha or IL1B. Mechanistically, sterically hinders the direct contact between the kinase domains of IKBKB in the IKK complex containing IKBKB, CHUK/IKKA and NEMO. The protein is Protein OPG200 (OPG200) of Vaccinia virus (strain Western Reserve) (VACV).